We begin with the raw amino-acid sequence, 472 residues long: E1B 55 kDa protein (472 aa).

The segment at 1 to 90 (MERPNPSVGG…GQRGEKRKLE (90 aa)) is disordered. The segment covering 32–44 (RLLAGAASARSGS) has biased composition (low complexity). Gly residues predominate over residues 45–57 (SAGGGGGGGGGGE). A phosphoserine mark is found at S468 and S469.

This sequence belongs to the adenoviridae E1B 55 kDa protein family. In terms of assembly, interacts with host PML-4 and PML-5; this interaction promotes efficient subnuclear targeting of E1B-55K to PML nuclear bodies. Interacts with E4-ORF3 protein. Interacts with E4-ORF6 protein.

The protein localises to the host nucleus. It localises to the host cytoplasm. Plays a major role to prevent cellular inhibition of viral genome replication. Assembles an SCF-like E3 ubiquitin ligase complex based on the cellular proteins ELOB, ELOC, CUL5 and RBX1, in cooperation with viral E4orf6. This viral RING-type ligase ubiquitinates cellular substrates and targets them to proteasomal degradation: TP53/p53, LIG4, MRE11-RAD50-NBS1 (MRN) complex, ITGA3, DAXX and BLM. E1B-55K probably acts as the substrate-specific adapter of the SCF-like E3 ubiquitin ligase complex. Degradation of host TP53/p53 activity is essential for preventing E1A-induced TP53 accumulation that would otherwise lead to cell apoptosis and growth arrest. E1B-55K also inactivates TP53 transcription-factor activity by binding its transactivation domain. E1B-55K also functions as a SUMO1 E3 ligase for TP53 which causes the latter to be sequestered in promyelocytic leukemia (PML) nuclear bodies thereby contributing to maximal inhibition of TP53 function. The sequence is that of E1B 55 kDa protein from Homo sapiens (Human).